The primary structure comprises 311 residues: Reaction center protein L chain (311 aa).

3 consecutive transmembrane segments (helical) span residues 68 to 90, 123 to 151, and 156 to 178; these read FWGF…ETIL, GFAW…SMKL, and HVPI…RPIA. 2 residues coordinate (7R,8Z)-bacteriochlorophyll b: H183 and H213. Residues 211 to 238 form a helical membrane-spanning segment; it reads PFHAIGITGLFASTWLLACHGSLILSAA. H230 is a Fe cation binding site. Residue F253 coordinates a ubiquinone. Residues 262-287 form a helical membrane-spanning segment; sequence GESGVHRLGYIFAIGGILSADLCILL. H267 contacts Fe cation.

Belongs to the reaction center PufL/M/PsbA/D family. In terms of assembly, reaction center is composed of four bacteriochlorophylls, two bacteriopheophytins, two ubiquinones, one iron, and two highly hydrophobic polypeptide chains (designated L and M).

The protein localises to the cell membrane. Functionally, the reaction center is a membrane-bound complex that mediates the initial photochemical event in the electron transfer process of photosynthesis. In Chloroflexus aurantiacus (strain ATCC 29366 / DSM 635 / J-10-fl), this protein is Reaction center protein L chain (pufL).